A 135-amino-acid polypeptide reads, in one-letter code: MVFVWLTAFFLVVALIVLVIYQLMCLADLEFDYINPFDSSSRINKVVIPEFVLQAALSVLFLLSGHWAMFLLSAPMVYYNYTLYQRRQHLVDVTEIFNHLGREKKRRLFKIVGLIILLFLSLFWMIWTVLLEEDE.

3 helical membrane-spanning segments follow: residues 2 to 22, 51 to 71, and 111 to 131; these read VFVW…VIYQ, FVLQ…AMFL, and IVGL…TVLL.

This sequence belongs to the cornichon family. Interacts with HKT1;3.

The protein localises to the endoplasmic reticulum membrane. It localises to the golgi apparatus membrane. Functionally, acts as a cargo receptor necessary for the transportation of the cation transporter HKT1;3 and possibly other secretory proteins from the endoplasmic reticulum (ER) in COPII-coated vesicles targeted to the Golgi apparatus. The protein is Protein cornichon homolog 1 of Oryza sativa subsp. japonica (Rice).